The sequence spans 240 residues: Probable transcriptional regulatory protein OEOE_0768 (240 aa).

A disordered region spans residues 1–21 (MSGHSKWHNIQGRKNAQDAKR).

Belongs to the TACO1 family.

It is found in the cytoplasm. The polypeptide is Probable transcriptional regulatory protein OEOE_0768 (Oenococcus oeni (strain ATCC BAA-331 / PSU-1)).